A 447-amino-acid chain; its full sequence is Delta(5) fatty acid desaturase fat-4 (447 aa).

The Cytochrome b5 heme-binding domain occupies 1 to 80; it reads MVLREQEHEP…TQEPEIPDIK (80 aa). 4 helical membrane passes run 137–157, 257–277, 292–312, and 319–339; these read IFTILFAFYLQYHTYYLPSAI, WTFMLPFLRLSWLLQSIIFVS, IYEQVGLSLHWAWSLGQLYFL, and IMFFLVSHLVGGFLLSHVVTF.

The protein belongs to the fatty acid desaturase type 1 family.

The protein resides in the membrane. The enzyme catalyses (11Z,14Z)-eicosadienoyl-CoA + 2 Fe(II)-[cytochrome b5] + O2 + 2 H(+) = (5Z,11Z,14Z)-eicosatrienoyl-CoA + 2 Fe(III)-[cytochrome b5] + 2 H2O. The catalysed reaction is (11Z,14Z,17Z)-eicosatrienoyl-CoA + 2 Fe(II)-[cytochrome b5] + O2 + 2 H(+) = (5Z,11Z,14Z,17Z)-eicosatetraenoyl-CoA + 2 Fe(III)-[cytochrome b5] + 2 H2O. It catalyses the reaction (8Z,11Z,14Z,17Z)-eicosatetraenoyl-CoA + 2 Fe(II)-[cytochrome b5] + O2 + 2 H(+) = (5Z,8Z,11Z,14Z,17Z)-eicosapentaenoyl-CoA + 2 Fe(III)-[cytochrome b5] + 2 H2O. It carries out the reaction (8Z,11Z,14Z)-eicosatrienoyl-CoA + 2 Fe(II)-[cytochrome b5] + O2 + 2 H(+) = (5Z,8Z,11Z,14Z)-eicosatetraenoyl-CoA + 2 Fe(III)-[cytochrome b5] + 2 H2O. It functions in the pathway lipid metabolism; polyunsaturated fatty acid biosynthesis. In terms of biological role, can function as a Delta(5) fatty acid desaturase and behaves as a (8-3) desaturase. Introduces a double bond in the fatty acid chain 5 carbons away from carboxy terminal to biosynthesize polyunsaturated fatty acids (PUFAs) endogenously (PUFAs are essential for membrane structure and many cellular and physiological processes). Acts on a variety of substrates such as dihomo-gamma-linoleoyl-CoA ((8Z,11Z,14Z)-eicosatrienoyl-CoA, 20:3n-6) to generate arachidonoyl-CoA ((5Z,8Z,11Z,14Z)-eicosatetraenoyl-CoA, 20:4n-6). Also acts on a number of other substrates, including fatty acids that do not contain a double bond at the 8 position like (11Z,14Z,17Z)-eicosatrienoyl-CoA (20:3n-3) to produce (5Z,11Z,14Z,17Z)-eicosatetraenoyl-CoA (20:4n-3). Unlike plants, Caenorhabditis elegans desaturases seem to use fatty acyl-CoAs as substrates. This Caenorhabditis elegans protein is Delta(5) fatty acid desaturase fat-4 (fat-4).